Consider the following 603-residue polypeptide: NADH-ubiquinone oxidoreductase chain 5 (603 aa).

16 helical membrane passes run 4–24 (FTTM…ATLI), 38–58 (TAIA…ICLG), 89–109 (FLPV…WYMA), 122–142 (LIFL…QLFI), 171–191 (AILY…WFLL), 211–233 (LPLL…HPWL), 241–261 (TPVS…FLLI), 273–293 (IQTL…ICAL), 301–320 (IVAF…IGIN), 325–347 (ALLH…GSII), 366–386 (MPLT…MPFL), 405–424 (NTWA…AYST), 457–477 (LMLG…PMSL), 488–508 (LAAL…NYLA), 524–544 (IMLG…SLLM), and 582–602 (GLIK…LLMI).

The protein belongs to the complex I subunit 5 family. As to quaternary structure, core subunit of respiratory chain NADH dehydrogenase (Complex I) which is composed of 45 different subunits.

Its subcellular location is the mitochondrion inner membrane. It carries out the reaction a ubiquinone + NADH + 5 H(+)(in) = a ubiquinol + NAD(+) + 4 H(+)(out). Its function is as follows. Core subunit of the mitochondrial membrane respiratory chain NADH dehydrogenase (Complex I) which catalyzes electron transfer from NADH through the respiratory chain, using ubiquinone as an electron acceptor. Essential for the catalytic activity and assembly of complex I. The chain is NADH-ubiquinone oxidoreductase chain 5 (MT-ND5) from Pongo abelii (Sumatran orangutan).